The primary structure comprises 134 residues: Biopolymer transport protein exbD2 (134 aa).

Over 1-17 (MRLGRRTSKQEEAQIDL) the chain is Cytoplasmic. The chain crosses the membrane as a helical span at residues 18-38 (TSMLDIVFIMLIFFIVTSSFV). At 39–134 (RESGVEVNRP…KSIALAAEKP (96 aa)) the chain is on the periplasmic side.

The protein belongs to the ExbD/TolR family. As to quaternary structure, the accessory proteins ExbB and ExbD seem to form a complex with TonB.

The protein localises to the cell inner membrane. Functionally, involved in the TonB-dependent energy-dependent transport of various receptor-bound substrates. This Vibrio cholerae serotype O1 (strain ATCC 39315 / El Tor Inaba N16961) protein is Biopolymer transport protein exbD2 (exbD2).